A 68-amino-acid chain; its full sequence is uncharacterized protein (68 aa).

Positions 1–15 (MTIIFLICLDASTQS) are cleaved as a signal peptide. The tract at residues 14-68 (QSTTNNSINNNNNNNNNNNNNNNNNNNNNNNNNNNNNNNNNNNNNNSKVFDFNIF) is disordered. N-linked (GlcNAc...) asparagine glycans are attached at residues asparagine 18 and asparagine 58. Residues 22-59 (NNNNNNNNNNNNNNNNNNNNNNNNNNNNNNNNNNNNNN) show a composition bias toward low complexity.

Its subcellular location is the secreted. This is an uncharacterized protein from Dictyostelium discoideum (Social amoeba).